The primary structure comprises 341 residues: NADH-ubiquinone oxidoreductase chain 2 (341 aa).

Helical transmembrane passes span 8-28, 61-81, 95-117, 145-165, 195-215, 238-258, 266-286, and 320-340; these read IFFIMLISGTLITISSNSWLG, FLTQAFASSILLFAIILMMMF, LLILSTLLLKSGAAPFHFWFPGV, LNINFFYFTILLSMIIGALGG, LLWLTYFLLYSILSMSIILMF, FFMFLNLLSLGGLPPFLGFLP, LVEMNQLFLLFIAVCLTLITL, and ILTMNFISIMGLLIITLIYLI.

This sequence belongs to the complex I subunit 2 family.

It is found in the mitochondrion inner membrane. The enzyme catalyses a ubiquinone + NADH + 5 H(+)(in) = a ubiquinol + NAD(+) + 4 H(+)(out). Functionally, core subunit of the mitochondrial membrane respiratory chain NADH dehydrogenase (Complex I) that is believed to belong to the minimal assembly required for catalysis. Complex I functions in the transfer of electrons from NADH to the respiratory chain. The immediate electron acceptor for the enzyme is believed to be ubiquinone. The sequence is that of NADH-ubiquinone oxidoreductase chain 2 from Aedes aegypti (Yellowfever mosquito).